Consider the following 365-residue polypeptide: Phospho-N-acetylmuramoyl-pentapeptide-transferase (365 aa).

Transmembrane regions (helical) follow at residues 15–35, 51–71, 96–116, 121–141, 156–176, 180–200, 217–237, 238–258, 279–299, and 344–364; these read PSGT…AVLI, VPVL…VPLL, TMGG…FAGF, IAVA…DWQV, LILQ…TAPE, ITFF…LAGF, GLAG…ALPA, HPGL…FIYH, LAAA…SGIF, and TQIV…SFIL.

This sequence belongs to the glycosyltransferase 4 family. MraY subfamily. It depends on Mg(2+) as a cofactor.

It is found in the cell inner membrane. It catalyses the reaction UDP-N-acetyl-alpha-D-muramoyl-L-alanyl-gamma-D-glutamyl-meso-2,6-diaminopimeloyl-D-alanyl-D-alanine + di-trans,octa-cis-undecaprenyl phosphate = di-trans,octa-cis-undecaprenyl diphospho-N-acetyl-alpha-D-muramoyl-L-alanyl-D-glutamyl-meso-2,6-diaminopimeloyl-D-alanyl-D-alanine + UMP. It participates in cell wall biogenesis; peptidoglycan biosynthesis. Catalyzes the initial step of the lipid cycle reactions in the biosynthesis of the cell wall peptidoglycan: transfers peptidoglycan precursor phospho-MurNAc-pentapeptide from UDP-MurNAc-pentapeptide onto the lipid carrier undecaprenyl phosphate, yielding undecaprenyl-pyrophosphoryl-MurNAc-pentapeptide, known as lipid I. In Picosynechococcus sp. (strain ATCC 27264 / PCC 7002 / PR-6) (Agmenellum quadruplicatum), this protein is Phospho-N-acetylmuramoyl-pentapeptide-transferase.